Reading from the N-terminus, the 640-residue chain is MKITFPDGAVKEFEPGVSTADIAASISPGLKKKALAGKLNGELLDLVTPIHEDGAIEIVTPDHEDALGILRHSTAHLMAQALKRLYPDVKFGVGPAIESGFYYDIDTEAVISDESLVEIEKEMQKIVRENVPIEREVVSREEAIKRFKAIGDQYKLELIEAIPEDETVTIYTQGEFFDLCRGVHVPSTGKIQVFKLLSVAGAYWRGDSNNKMLQRIYGTAFFDKNGLKEFIQMQKEAKERDHRKLGKELELFTNSIEVGQGLPLWLPKGATIRRVIERYIVDKEERLGYNHVYTPIMANVELYKTSGHWDHYHEDMFPTMKMDNEELVLRPMNCPHHMMIYKNDIHSYRELPIRIAELGMMHRYEMSGALSGLQRVRGMTLNDAHVFVRPDQIKDEFKRVVELILEVYKDFDITDYSFRLSYRDPKNTEKYFDDDAMWEKAQAMLKSAMDEMEMDYFEAEGEAAFYGPKLDVQVKTAIGKEETLSTVQLDFLLPERFDLTYIGEDGEKHRPVVIHRGVVSTMERFVAYLIEEYKGAFPTWLAPVQMEIIPVNADAHLDYAKGVQDKLQRAGLRAEVDDRNEKLGYKIREAQTKKIPYALVLGDQEVEAGSVNVRRYGSKDSETMDLDAFIAQVVAEVSKY.

One can recognise a TGS domain in the interval 1–60 (MKITFPDGAVKEFEPGVSTADIAASISPGLKKKALAGKLNGELLDLVTPIHEDGAIEIVT). The interval 241-538 (DHRKLGKELE…LIEEYKGAFP (298 aa)) is catalytic. The Zn(2+) site is built by cysteine 334, histidine 385, and histidine 515.

The protein belongs to the class-II aminoacyl-tRNA synthetase family. In terms of assembly, homodimer. The cofactor is Zn(2+).

Its subcellular location is the cytoplasm. It catalyses the reaction tRNA(Thr) + L-threonine + ATP = L-threonyl-tRNA(Thr) + AMP + diphosphate + H(+). Its function is as follows. Catalyzes the attachment of threonine to tRNA(Thr) in a two-step reaction: L-threonine is first activated by ATP to form Thr-AMP and then transferred to the acceptor end of tRNA(Thr). Also edits incorrectly charged L-seryl-tRNA(Thr). This chain is Threonine--tRNA ligase, found in Listeria monocytogenes serovar 1/2a (strain ATCC BAA-679 / EGD-e).